Consider the following 469-residue polypeptide: NADH-quinone oxidoreductase subunit 13 (469 aa).

A run of 14 helical transmembrane segments spans residues 1 to 21 (MVVL…LGLP), 23 to 43 (ALGV…FLTH), 47 to 67 (VAHA…AFGL), 69 to 89 (GLSA…ALVA), 91 to 111 (VEGR…GLFA), 115 to 135 (LLVF…MLYL), 144 to 164 (ALYT…AAVL), 190 to 210 (AFWV…LFPL), 258 to 278 (GLLL…AFAA), 284 to 304 (LLAY…FSGT), 308 to 328 (AMGG…LFLL), 354 to 374 (LAAL…LSGF), 390 to 410 (WLAA…LTAF), and 430 to 450 (WGFA…PGYF).

It belongs to the complex I subunit 4 family. In terms of assembly, NDH-1 is composed of 15 different subunits, Nqo1 to Nqo15. The complex has a L-shaped structure, with the hydrophobic arm (subunits Nqo7, Nqo8 and Nqo10 to Nqo14) embedded in the membrane and the hydrophilic peripheral arm (subunits Nqo1 to Nqo6, Nqo9 and Nqo15) protruding into the bacterial cytoplasm. The hydrophilic domain contains all the redox centers.

The protein resides in the cell inner membrane. The enzyme catalyses a quinone + NADH + 5 H(+)(in) = a quinol + NAD(+) + 4 H(+)(out). NDH-1 shuttles electrons from NADH, via FMN and iron-sulfur (Fe-S) centers, to quinones in the respiratory chain. The immediate electron acceptor for the enzyme in this species is menaquinone. Couples the redox reaction to proton translocation (for every two electrons transferred, four hydrogen ions are translocated across the cytoplasmic membrane), and thus conserves the redox energy in a proton gradient required for the synthesis of ATP. This is NADH-quinone oxidoreductase subunit 13 (nqo13) from Thermus thermophilus (strain ATCC 27634 / DSM 579 / HB8).